The primary structure comprises 225 residues: Claudin-17 (225 aa).

The Cytoplasmic portion of the chain corresponds to 1–7 (MAFYPLQ). A helical membrane pass occupies residues 8–28 (IAGLVLGFLGMVGTLATTLLP). The Extracellular segment spans residues 29 to 81 (QWRVSAFIGSNIIVFERIWEGLWMNCVRQAKARLQCKFYSSMLALSPALEAAR). Residues 82–102 (ALMCVAVALSLIALIIGICGM) traverse the membrane as a helical segment. Over 103–124 (KKIQCTGSNERAKAYLLGTSGV) the chain is Cytoplasmic. Residues 125 to 145 (LFILTGIFVLIPVCWTANIII) form a helical membrane-spanning segment. Topologically, residues 146 to 164 (RDFYNPAVHVGQKRELGAA) are extracellular. A helical transmembrane segment spans residues 165–185 (LFLGWASVAVLFIAGGLLCGF). At 186 to 225 (CCCNRKKQRDGYPAPRPSMPRTDERRRNMTRQSETPTSYV) the chain is on the cytoplasmic side. Residues 194–225 (RDGYPAPRPSMPRTDERRRNMTRQSETPTSYV) are disordered. A compositionally biased stretch (polar residues) spans 215–225 (TRQSETPTSYV).

The protein belongs to the claudin family. As to quaternary structure, does not form homotypic polymeric strands and it is not sufficient to form tight junctions by its own. Interacts with OCLN.

It is found in the cell junction. It localises to the tight junction. Its subcellular location is the cell membrane. The enzyme catalyses chloride(in) = chloride(out). It carries out the reaction hydrogencarbonate(in) = hydrogencarbonate(out). It catalyses the reaction bromide(in) = bromide(out). The catalysed reaction is iodide(out) = iodide(in). The enzyme catalyses fluoride(in) = fluoride(out). It carries out the reaction nitrate(in) = nitrate(out). It catalyses the reaction thiocyanate(in) = thiocyanate(out). Its function is as follows. Channel-forming tight junction protein with selectivity for anions, including chloride and hydrogencarbonate, and for solutes smaller than 9 Angstrom in diameter. In the kidney proximal tubule, may be involved in quantitative reabsorption of filtered anions. Does not affect water permeability. The protein is Claudin-17 (CLDN17) of Sus scrofa (Pig).